The sequence spans 474 residues: 3-isopropylmalate dehydratase large subunit (474 aa).

Positions 355, 415, and 418 each coordinate [4Fe-4S] cluster.

Belongs to the aconitase/IPM isomerase family. LeuC type 1 subfamily. As to quaternary structure, heterodimer of LeuC and LeuD. [4Fe-4S] cluster is required as a cofactor.

The catalysed reaction is (2R,3S)-3-isopropylmalate = (2S)-2-isopropylmalate. It functions in the pathway amino-acid biosynthesis; L-leucine biosynthesis; L-leucine from 3-methyl-2-oxobutanoate: step 2/4. Its function is as follows. Catalyzes the isomerization between 2-isopropylmalate and 3-isopropylmalate, via the formation of 2-isopropylmaleate. This chain is 3-isopropylmalate dehydratase large subunit, found in Shewanella sp. (strain MR-4).